Consider the following 281-residue polypeptide: 2,3,4,5-tetrahydropyridine-2,6-dicarboxylate N-succinyltransferase (281 aa).

Substrate contacts are provided by R108 and D145.

Belongs to the transferase hexapeptide repeat family. As to quaternary structure, homotrimer.

It is found in the cytoplasm. It catalyses the reaction (S)-2,3,4,5-tetrahydrodipicolinate + succinyl-CoA + H2O = (S)-2-succinylamino-6-oxoheptanedioate + CoA. It functions in the pathway amino-acid biosynthesis; L-lysine biosynthesis via DAP pathway; LL-2,6-diaminopimelate from (S)-tetrahydrodipicolinate (succinylase route): step 1/3. This is 2,3,4,5-tetrahydropyridine-2,6-dicarboxylate N-succinyltransferase from Methylobacterium nodulans (strain LMG 21967 / CNCM I-2342 / ORS 2060).